A 409-amino-acid chain; its full sequence is 2,3-bisphosphoglycerate-independent phosphoglycerate mutase 1 (409 aa).

The segment covering 163–173 (SDADPKVEGKP) has biased composition (basic and acidic residues). Residues 163 to 184 (SDADPKVEGKPPKKIKALDGSP) are disordered.

The protein belongs to the BPG-independent phosphoglycerate mutase family. A-PGAM subfamily.

The catalysed reaction is (2R)-2-phosphoglycerate = (2R)-3-phosphoglycerate. The protein operates within carbohydrate degradation; glycolysis; pyruvate from D-glyceraldehyde 3-phosphate: step 3/5. In terms of biological role, catalyzes the interconversion of 2-phosphoglycerate and 3-phosphoglycerate. The protein is 2,3-bisphosphoglycerate-independent phosphoglycerate mutase 1 (apgM1) of Methanothermobacter thermautotrophicus (strain ATCC 29096 / DSM 1053 / JCM 10044 / NBRC 100330 / Delta H) (Methanobacterium thermoautotrophicum).